The chain runs to 303 residues: Methionyl-tRNA formyltransferase (303 aa).

108 to 111 (SDLP) is a (6S)-5,6,7,8-tetrahydrofolate binding site.

Belongs to the Fmt family.

It carries out the reaction L-methionyl-tRNA(fMet) + (6R)-10-formyltetrahydrofolate = N-formyl-L-methionyl-tRNA(fMet) + (6S)-5,6,7,8-tetrahydrofolate + H(+). Attaches a formyl group to the free amino group of methionyl-tRNA(fMet). The formyl group appears to play a dual role in the initiator identity of N-formylmethionyl-tRNA by promoting its recognition by IF2 and preventing the misappropriation of this tRNA by the elongation apparatus. This is Methionyl-tRNA formyltransferase from Rickettsia prowazekii (strain Madrid E).